We begin with the raw amino-acid sequence, 197 residues long: Small ribosomal subunit protein eS1 (197 aa).

Belongs to the eukaryotic ribosomal protein eS1 family.

This Sulfolobus acidocaldarius (strain ATCC 33909 / DSM 639 / JCM 8929 / NBRC 15157 / NCIMB 11770) protein is Small ribosomal subunit protein eS1.